The primary structure comprises 170 residues: MAKLLCTLFLAGFVFLANAYSTDPPNPPDIENVFDGIPSIFNPVNWISNIASFFNPSNWVSNIPSILNPVNWVKKIIDINNPFTYIPDFLNPFHYFPKLNPIKWIPGWIPGLGKDRCLLPKVTGPCKASLTRYYYDKDTKACVEFIYGGCRGNRNNFKQKDECEKACTDH.

Residues 1-19 (MAKLLCTLFLAGFVFLANA) form the signal peptide. A propeptide spanning residues 20–113 (YSTDPPNPPD…WIPGWIPGLG (94 aa)) is cleaved from the precursor. In terms of domain architecture, BPTI/Kunitz inhibitor spans 117-167 (CLLPKVTGPCKASLTRYYYDKDTKACVEFIYGGCRGNRNNFKQKDECEKAC). Disulfide bonds link Cys-117–Cys-167, Cys-126–Cys-150, and Cys-142–Cys-163.

It belongs to the venom Kunitz-type family. 02 (native) subfamily. O-glycosylated. Only expressed in epidermis.

The protein resides in the secreted. In terms of biological role, serine protease inhibitor with activity against plasmin (IC(50)=10.07 nM), trypsin (IC(50)=43.39 nM), chymotrypsin (IC(50)=109.25 nM) and neutrophil elastase (IC(50)=446.93 nM). This chain is Kunitz-type U1-aranetoxin-Av1a, found in Araneus ventricosus (Orbweaver spider).